The primary structure comprises 155 residues: Endoribonuclease YbeY (155 aa).

A disordered region spans residues 64-84 (SFPMDEMRAPGDDEDPPSGLL). Residues His115, His119, and His125 each contribute to the Zn(2+) site.

The protein belongs to the endoribonuclease YbeY family. Zn(2+) serves as cofactor.

The protein localises to the cytoplasm. In terms of biological role, single strand-specific metallo-endoribonuclease involved in late-stage 70S ribosome quality control and in maturation of the 3' terminus of the 16S rRNA. In Cutibacterium acnes (strain DSM 16379 / KPA171202) (Propionibacterium acnes), this protein is Endoribonuclease YbeY.